Reading from the N-terminus, the 80-residue chain is Putative defensin-like protein 23 (80 aa).

A signal peptide spans 1–25; that stretch reads MTTTMKIMSFAMLLVLLFSIDVVEG. 4 disulfide bridges follow: cysteine 31/cysteine 80, cysteine 41/cysteine 66, cysteine 50/cysteine 76, and cysteine 54/cysteine 78.

It belongs to the DEFL family.

It localises to the secreted. This is Putative defensin-like protein 23 from Arabidopsis thaliana (Mouse-ear cress).